The primary structure comprises 379 residues: Phospho-N-acetylmuramoyl-pentapeptide-transferase (379 aa).

10 helical membrane passes run 27–47 (FRTA…GPAV), 76–96 (TMGG…WADL), 100–120 (FVWI…TDDY), 135–155 (AKMG…VLVQ), 185–205 (PHIW…VLVG), 218–238 (GLAI…TYVS), 255–275 (VGEL…FLWY), 283–303 (FMGD…AVII), 307–327 (LLLP…ILQV), and 356–376 (KIIV…LTTL).

It belongs to the glycosyltransferase 4 family. MraY subfamily. Mg(2+) is required as a cofactor.

The protein resides in the cell inner membrane. It carries out the reaction UDP-N-acetyl-alpha-D-muramoyl-L-alanyl-gamma-D-glutamyl-meso-2,6-diaminopimeloyl-D-alanyl-D-alanine + di-trans,octa-cis-undecaprenyl phosphate = di-trans,octa-cis-undecaprenyl diphospho-N-acetyl-alpha-D-muramoyl-L-alanyl-D-glutamyl-meso-2,6-diaminopimeloyl-D-alanyl-D-alanine + UMP. It participates in cell wall biogenesis; peptidoglycan biosynthesis. Its function is as follows. Catalyzes the initial step of the lipid cycle reactions in the biosynthesis of the cell wall peptidoglycan: transfers peptidoglycan precursor phospho-MurNAc-pentapeptide from UDP-MurNAc-pentapeptide onto the lipid carrier undecaprenyl phosphate, yielding undecaprenyl-pyrophosphoryl-MurNAc-pentapeptide, known as lipid I. In Koribacter versatilis (strain Ellin345), this protein is Phospho-N-acetylmuramoyl-pentapeptide-transferase.